The primary structure comprises 265 residues: ETS-related transcription factor Elf-5 (265 aa).

The 87-residue stretch at 43–129 (YPAFEHQTAC…FILQNIRTQG (87 aa)) folds into the PNT domain. Residues 173 to 254 (SHLWEFVRDL…VDRRLVYKFG (82 aa)) constitute a DNA-binding region (ETS).

This sequence belongs to the ETS family. As to expression, expressed exclusively in tissues with a high content of epithelial cells. Highly expressed in salivary gland, mammary gland, kidney and prostate. Weakly expressed in placenta and lung. Isoform 1 and isoform 2 are differentially expressed in different tissues. In the kidney, only isoform 1 was expressed, while prostate expressed both isoforms, with levels of isoform 2 being higher. Expression is up-regulated during keratinocyte differentiation. Several epithelial carcinoma cell lines showed lack of expression.

It is found in the nucleus. Functionally, transcriptionally activator that may play a role in regulating the later stages of keratinocytes terminal differentiation. Isoform 2 binds to DNA sequences containing the consensus nucleotide core sequence GGA[AT]. Transcriptionally activates SPRR2A and the parotid gland-specific PSP promoters. The sequence is that of ETS-related transcription factor Elf-5 (ELF5) from Homo sapiens (Human).